Here is a 285-residue protein sequence, read N- to C-terminus: Inositol polyphosphate 1-phosphatase (285 aa).

Mg(2+) contacts are provided by Glu68, Asp106, Leu108, and Asp109. 1D-myo-inositol 1,4-bisphosphate-binding residues include Asp109, Gly110, Thr111, Ser173, Gly195, Ser197, and Lys200. Asp223 is a Mg(2+) binding site.

Belongs to the inositol monophosphatase superfamily. Monomer. The cofactor is Mg(2+).

It localises to the cytoplasm. It catalyses the reaction 1D-myo-inositol 1,4-bisphosphate + H2O = 1D-myo-inositol 4-phosphate + phosphate. It carries out the reaction adenosine 3',5'-bisphosphate + H2O = AMP + phosphate. With respect to regulation, partially inhibited by Li(2+). Catalyzes the hydrolysis of the 1-position phosphate from inositol 1,4-bisphosphate. Is also able to convert 3'(2')-phosphoadenosine 5'-phosphate (PAP) to AMP but with less efficiency. The sequence is that of Inositol polyphosphate 1-phosphatase from Entamoeba histolytica (strain ATCC 30459 / HM-1:IMSS / ABRM).